A 218-amino-acid chain; its full sequence is Thiopurine S-methyltransferase (218 aa).

S-adenosyl-L-methionine contacts are provided by tryptophan 10, leucine 45, glutamate 66, and arginine 123.

It belongs to the class I-like SAM-binding methyltransferase superfamily. TPMT family.

It localises to the cytoplasm. The catalysed reaction is S-adenosyl-L-methionine + a thiopurine = S-adenosyl-L-homocysteine + a thiopurine S-methylether.. The chain is Thiopurine S-methyltransferase from Pseudomonas aeruginosa (strain LESB58).